We begin with the raw amino-acid sequence, 100 residues long: Tetrahydromethanopterin S-methyltransferase subunit B (100 aa).

Residues 80–100 traverse the membrane as a helical segment; that stretch reads KLTNIVYGFILGLIILFALLL.

The protein belongs to the MtrB family. In terms of assembly, the complex is composed of 8 subunits; MtrA, MtrB, MtrC, MtrD, MtrE, MtrF, MtrG and MtrH.

It localises to the cell membrane. The catalysed reaction is 5-methyl-5,6,7,8-tetrahydromethanopterin + coenzyme M + 2 Na(+)(in) = 5,6,7,8-tetrahydromethanopterin + methyl-coenzyme M + 2 Na(+)(out). Its pathway is one-carbon metabolism; methanogenesis from CO(2); methyl-coenzyme M from 5,10-methylene-5,6,7,8-tetrahydromethanopterin: step 2/2. Its function is as follows. Part of a complex that catalyzes the formation of methyl-coenzyme M and tetrahydromethanopterin from coenzyme M and methyl-tetrahydromethanopterin. This is an energy-conserving, sodium-ion translocating step. The polypeptide is Tetrahydromethanopterin S-methyltransferase subunit B (Methanothermobacter marburgensis (strain ATCC BAA-927 / DSM 2133 / JCM 14651 / NBRC 100331 / OCM 82 / Marburg) (Methanobacterium thermoautotrophicum)).